A 165-amino-acid polypeptide reads, in one-letter code: Small ribosomal subunit protein uS5 (165 aa).

The region spanning 10–73 (LKEKVVFINR…EDAKKHLVEV (64 aa)) is the S5 DRBM domain.

The protein belongs to the universal ribosomal protein uS5 family. Part of the 30S ribosomal subunit. Contacts proteins S4 and S8.

With S4 and S12 plays an important role in translational accuracy. Functionally, located at the back of the 30S subunit body where it stabilizes the conformation of the head with respect to the body. This chain is Small ribosomal subunit protein uS5, found in Clostridium novyi (strain NT).